The chain runs to 271 residues: ELH (271 aa).

An N-terminal signal peptide occupies residues 1 to 28 (MKRPNNRPTNTMSLILCLTLSSLCVSSQ). 2 propeptides span residues 29–95 (SASV…NEKR) and 162–184 (AAGG…RRKR). A disordered region spans residues 162–190 (AAGGMEQSEGQNPETESHSRRKRSVLTPS). Position 241 is a lysine amide (lysine 241).

This sequence belongs to the molluscan ELH family. Bag cell neurons.

It localises to the secreted. In terms of biological role, ELH acts as a neurotransmitter locally, upon neurons of the abdominal ganglion and as a hormone by diffusing into the circulating hemolymph and modulating the activity of other organs. It specifically causes contraction of smooth muscle in the ovotestis and expulsion of the egg string. Its function is as follows. Alpha-BCP decreases the activity of a cluster of neurons in the left upper quadrant of the abdominal ganglion. Functionally, beta-BCP specifically excites 2 neurons, L1 and R1, in the abdominal ganglion. This is ELH from Aplysia californica (California sea hare).